A 476-amino-acid polypeptide reads, in one-letter code: Bifunctional protein HldE (476 aa).

Positions 1–318 are ribokinase; the sequence is MKPILPDYNN…AEAIHGSRDT (318 aa). Residue 195–198 participates in ATP binding; sequence NMSE. The active site involves Asp264. The cytidylyltransferase stretch occupies residues 344-476; it reads MTNGCFDILH…IIDAIKGGRG (133 aa).

This sequence in the N-terminal section; belongs to the carbohydrate kinase PfkB family. It in the C-terminal section; belongs to the cytidylyltransferase family. In terms of assembly, homodimer.

It carries out the reaction D-glycero-beta-D-manno-heptose 7-phosphate + ATP = D-glycero-beta-D-manno-heptose 1,7-bisphosphate + ADP + H(+). It catalyses the reaction D-glycero-beta-D-manno-heptose 1-phosphate + ATP + H(+) = ADP-D-glycero-beta-D-manno-heptose + diphosphate. It functions in the pathway nucleotide-sugar biosynthesis; ADP-L-glycero-beta-D-manno-heptose biosynthesis; ADP-L-glycero-beta-D-manno-heptose from D-glycero-beta-D-manno-heptose 7-phosphate: step 1/4. Its pathway is nucleotide-sugar biosynthesis; ADP-L-glycero-beta-D-manno-heptose biosynthesis; ADP-L-glycero-beta-D-manno-heptose from D-glycero-beta-D-manno-heptose 7-phosphate: step 3/4. The protein operates within bacterial outer membrane biogenesis; LPS core biosynthesis. In terms of biological role, catalyzes the phosphorylation of D-glycero-D-manno-heptose 7-phosphate at the C-1 position to selectively form D-glycero-beta-D-manno-heptose-1,7-bisphosphate. Catalyzes the ADP transfer from ATP to D-glycero-beta-D-manno-heptose 1-phosphate, yielding ADP-D-glycero-beta-D-manno-heptose. The sequence is that of Bifunctional protein HldE from Vibrio vulnificus (strain YJ016).